The sequence spans 522 residues: BTB/POZ domain-containing protein 16 (522 aa).

The BTB domain occupies 166–222; it reads INDPAVTRVAFALALKNLYMKEVEMTVDNVLGVLASAHILQFNRLFQKCVNMMMNRL.

The polypeptide is BTB/POZ domain-containing protein 16 (Btbd16) (Mus musculus (Mouse)).